We begin with the raw amino-acid sequence, 197 residues long: Glycerol-3-phosphate acyltransferase (197 aa).

The next 5 helical transmembrane spans lie at 6-26, 58-78, 82-102, 116-136, and 157-177; these read LFIV…AIIV, AITL…AHYL, MLNV…PIFF, ALLA…VFVA, and FYLI…CLWI.

The protein belongs to the PlsY family. Probably interacts with PlsX.

The protein localises to the cell inner membrane. The enzyme catalyses an acyl phosphate + sn-glycerol 3-phosphate = a 1-acyl-sn-glycero-3-phosphate + phosphate. It functions in the pathway lipid metabolism; phospholipid metabolism. Catalyzes the transfer of an acyl group from acyl-phosphate (acyl-PO(4)) to glycerol-3-phosphate (G3P) to form lysophosphatidic acid (LPA). This enzyme utilizes acyl-phosphate as fatty acyl donor, but not acyl-CoA or acyl-ACP. The polypeptide is Glycerol-3-phosphate acyltransferase (Ruthia magnifica subsp. Calyptogena magnifica).